The primary structure comprises 189 residues: MSEYIRNQILGIADNFKALASMAGDIEQVARICTDTLKAGNKIMFCGNGGSAADSQHLAAELVGRYKLNRPAMNALALTVDTSILTAVGNDYGYETVFSRQLEGVGRPGDLLVGLSTSGNSRNIVLAMELARRMGVRTVALTGRGGGEMKEVAEFCIAVPSDATNNIQEMHIAVGHLVCELVEREIYGG.

The SIS domain maps to 33-189; sequence CTDTLKAGNK…ELVEREIYGG (157 aa). A substrate-binding site is contributed by 48 to 50; the sequence is NGG. Zn(2+)-binding residues include His-57 and Glu-61. Residues Glu-61, 90-91, 116-118, Ser-121, and Gln-168 contribute to the substrate site; these read ND and STS. Zn(2+) is bound by residues Gln-168 and His-176.

Belongs to the SIS family. GmhA subfamily. Zn(2+) is required as a cofactor.

The protein localises to the cytoplasm. The catalysed reaction is 2 D-sedoheptulose 7-phosphate = D-glycero-alpha-D-manno-heptose 7-phosphate + D-glycero-beta-D-manno-heptose 7-phosphate. It functions in the pathway carbohydrate biosynthesis; D-glycero-D-manno-heptose 7-phosphate biosynthesis; D-glycero-alpha-D-manno-heptose 7-phosphate and D-glycero-beta-D-manno-heptose 7-phosphate from sedoheptulose 7-phosphate: step 1/1. Functionally, catalyzes the isomerization of sedoheptulose 7-phosphate in D-glycero-D-manno-heptose 7-phosphate. The chain is Phosphoheptose isomerase from Akkermansia muciniphila (strain ATCC BAA-835 / DSM 22959 / JCM 33894 / BCRC 81048 / CCUG 64013 / CIP 107961 / Muc).